A 37-amino-acid chain; its full sequence is Large ribosomal subunit protein bL36c (37 aa).

The protein belongs to the bacterial ribosomal protein bL36 family.

The protein resides in the plastid. This Cuscuta exaltata (Tall dodder) protein is Large ribosomal subunit protein bL36c.